The chain runs to 186 residues: MANKLFLVSATLALFFLLTNASVYRTVVEVDEDDATNPAGPFRIPKCRKEFQQAQHLRACQQWLHKQAMQPGGGSGPSWTLDGEFDFEDDVENQQQGPQQRPPPPQQCCNELHQEEPLCVCPTLKGASKAVRQQVRQQQGQQMQGQQMQQVISRVYQTATHLPRVCNIRQVSICPFQKTMPGPGFY.

An N-terminal signal peptide occupies residues 1–21 (MANKLFLVSATLALFFLLTNA). 2 propeptides span residues 22–38 (SVYRTVVEVDEDDATNP) and 77–97 (PSWTLDGEFDFEDDVENQQQG).

Belongs to the 2S seed storage albumins family. The mature protein consists of a small and a large chain linked by disulfide bonds. As to expression, cotyledons and the axis.

The small, basic, water-soluble napins are one of the two major kinds of storage proteins synthesized in the seed during its maturation. The sequence is that of Napin embryo-specific from Brassica napus (Rape).